The following is a 410-amino-acid chain: Peptidase T (410 aa).

Histidine 79 is a Zn(2+) binding site. The active site involves aspartate 81. Aspartate 142 is a binding site for Zn(2+). Glutamate 176 (proton acceptor) is an active-site residue. Zn(2+) is bound by residues glutamate 177, aspartate 199, and histidine 381.

Belongs to the peptidase M20B family. Zn(2+) serves as cofactor.

The protein localises to the cytoplasm. The catalysed reaction is Release of the N-terminal residue from a tripeptide.. In terms of biological role, cleaves the N-terminal amino acid of tripeptides. This chain is Peptidase T, found in Listeria welshimeri serovar 6b (strain ATCC 35897 / DSM 20650 / CCUG 15529 / CIP 8149 / NCTC 11857 / SLCC 5334 / V8).